The chain runs to 314 residues: Tyrosine recombinase XerC (314 aa).

One can recognise a Core-binding (CB) domain in the interval 1–85 (MNEQVEAFLR…AVKSFFTFLT (85 aa)). The Tyr recombinase domain occupies 106–291 (DLPRALTPRQ…NHESSHTPHA (186 aa)). Residues Arg-147, Lys-171, His-243, Arg-246, and His-269 contribute to the active site. Residue Tyr-278 is the O-(3'-phospho-DNA)-tyrosine intermediate of the active site. Residues 284-314 (ESSHTPHAHPAPRASEVNGVRDEQALVPEEK) are disordered. Over residues 302–314 (GVRDEQALVPEEK) the composition is skewed to basic and acidic residues.

The protein belongs to the 'phage' integrase family. XerC subfamily. In terms of assembly, forms a cyclic heterotetrameric complex composed of two molecules of XerC and two molecules of XerD.

Its subcellular location is the cytoplasm. Functionally, site-specific tyrosine recombinase, which acts by catalyzing the cutting and rejoining of the recombining DNA molecules. The XerC-XerD complex is essential to convert dimers of the bacterial chromosome into monomers to permit their segregation at cell division. It also contributes to the segregational stability of plasmids. The protein is Tyrosine recombinase XerC of Roseiflexus castenholzii (strain DSM 13941 / HLO8).